Consider the following 263-residue polypeptide: 3-methyl-2-oxobutanoate hydroxymethyltransferase (263 aa).

Positions 45 and 84 each coordinate Mg(2+). 3-methyl-2-oxobutanoate-binding positions include 45 to 46 (DS), D84, and K112. E114 is a Mg(2+) binding site. The Proton acceptor role is filled by E181.

This sequence belongs to the PanB family. Homodecamer; pentamer of dimers. Mg(2+) serves as cofactor.

Its subcellular location is the cytoplasm. It catalyses the reaction 3-methyl-2-oxobutanoate + (6R)-5,10-methylene-5,6,7,8-tetrahydrofolate + H2O = 2-dehydropantoate + (6S)-5,6,7,8-tetrahydrofolate. The protein operates within cofactor biosynthesis; (R)-pantothenate biosynthesis; (R)-pantoate from 3-methyl-2-oxobutanoate: step 1/2. Functionally, catalyzes the reversible reaction in which hydroxymethyl group from 5,10-methylenetetrahydrofolate is transferred onto alpha-ketoisovalerate to form ketopantoate. The chain is 3-methyl-2-oxobutanoate hydroxymethyltransferase from Chromohalobacter salexigens (strain ATCC BAA-138 / DSM 3043 / CIP 106854 / NCIMB 13768 / 1H11).